We begin with the raw amino-acid sequence, 446 residues long: G patch domain-containing protein 4 (446 aa).

Residue M1 is modified to N-acetylmethionine. T4 is subject to Phosphothreonine. The region spanning 11–57 (GMKFAEEQLLKHGWTQGKGLGRKENGITQALRVTLKQDTHGVGHDPA) is the G-patch domain. K46 is covalently cross-linked (Glycyl lysine isopeptide (Lys-Gly) (interchain with G-Cter in SUMO2)). Phosphothreonine is present on T116. Disordered regions lie at residues 116 to 140 (TSGGEKPNKDLESCSDDDNQGSKSP) and 188 to 446 (QDPG…KKRD). A phosphoserine mark is found at S128, S130, and S139. Residues 166–251 (TMKAKLARLE…KKKRRHQEGK (86 aa)) are a coiled coil. A compositionally biased stretch (basic and acidic residues) spans 219–237 (ASERNDADEKHPEHAEQNI). The span at 238-248 (RKSKKKKRRHQ) shows a compositional bias: basic residues. 4 stretches are compositionally biased toward basic and acidic residues: residues 249-268 (EGKVSDEREGTTKGNEKEDA), 297-328 (HHEEEKMGVLEEGGKGKEAAGSVRTEEVESRA), 363-375 (REAESRACSDGRS), and 392-409 (LDVRDEKDGGAREAESRA). 2 stretches are compositionally biased toward basic residues: residues 416-427 (RGKRKRQQHPKK) and 437-446 (KAKKKQKKRD).

The sequence is that of G patch domain-containing protein 4 (GPATCH4) from Homo sapiens (Human).